A 303-amino-acid chain; its full sequence is Vesicle-trafficking protein SEC22c (303 aa).

Residues 1–183 (MSMILFASIV…EPAPNLRMKP (183 aa)) lie on the Cytoplasmic side of the membrane. The region spanning 8 to 119 (SIVRVRDGLP…YAFLEFDSVI (112 aa)) is the Longin domain. The chain crosses the membrane as a helical span at residues 184–204 (VTALGVLSLVLNIMCAALNLI). Topologically, residues 205–223 (RGVHLAEHSLQVAQEEVGN) are lumenal. A helical transmembrane segment spans residues 224–244 (ILAFFIPSVACIVQCYLYLFY). At 245–248 (SPAR) the chain is on the cytoplasmic side. Residues 249–269 (TLKVLLMLASICLGNAYLHGL) form a helical membrane-spanning segment. Residue Arg270 is a topological domain, lumenal. The helical transmembrane segment at 271 to 291 (NTWQILFHVGVAFLSSYQILT) threads the bilayer. The Cytoplasmic segment spans residues 292-303 (RQLQERQSDYGV).

Belongs to the synaptobrevin family.

The protein resides in the endoplasmic reticulum membrane. Its function is as follows. May be involved in vesicle transport between the ER and the Golgi complex. The polypeptide is Vesicle-trafficking protein SEC22c (Sec22c) (Mus musculus (Mouse)).